The following is a 222-amino-acid chain: Translation initiation factor 6 (222 aa).

It belongs to the eIF-6 family.

Binds to the 50S ribosomal subunit and prevents its association with the 30S ribosomal subunit to form the 70S initiation complex. The chain is Translation initiation factor 6 from Methanothermobacter thermautotrophicus (strain ATCC 29096 / DSM 1053 / JCM 10044 / NBRC 100330 / Delta H) (Methanobacterium thermoautotrophicum).